Reading from the N-terminus, the 940-residue chain is MAPVRGDGMRGLAVFISDIRNCKSKEAEVKRINKELANIRSKFKGDKTLDGYQKKKYVCKLLFIFLLGHDIDFGHMEAVNLLSSNKYSEKQIGYLFISVLVNTNSDLIRLIIQSIKNDLQSRNPVHVNLALQCIANIGSRDMAESFSNEIPKLLVSGDTMDVVKQSAALCLLRLFRSSPDIIPGGEWTSRIIHLLNDQHMGVVTAATSLIDALVKRNPDEYKGCVNLAVSRLSRIVTASYTDLQDYTYYFVPAPWLSVKLLRLLQNYNPVTEEAGVRARLNETLETILNKAQEPPKSKKVQHSNAKNAVLFEAINLIIHSDSEPNLLVRACNQLGQFLSNRETNLRYLALESMCHLATSEFSHEEVKKHQEVVILSMKMEKDVSVRQMAVDLLYAMCDRGNAEEIVQEMLNYLETADYSIREEMVLKVAILAEKYATDYTWYVDVILNLIRIAGDYVSEEVWYRVIQIVINREEVQGYAAKTVFEALQAPACHENMVKVGGYILGEFGNLIAGDSRSAPLVQFKLLHSKYHLCSPMTRALLLSTYIKFINLFPEIRTNIQDVFRQHSNLRSADAELQQRASEYLQLSIVASTDVLATVLEEMPSFPERESSILAVLKKKKPGRVPENEIRESKSPAPLTSAAQNNALVNNSHSKLNNSNANTDLLGLSTPPSNNIGSGSNSNSTLIDVLGDMYGSNSNNNSSAVYNTKKFLFKNNGVLFENEMLQIGVKSEFRQNLGRLGLFYGNKTQVPLTNFNPVLQWSAEDALKLNVQMKVVEPTLEAGAQIQQLLTAECIEDYADAPTIEISFRYNGTQQKFSIKLPLSVNKFFEPTEMNAESFFARWKNLSGEQQRSQKVFKAAQPLDLPGARNKLMGFGMQLLDQVDPNPDNMVCAGIIHTQSQQVGCLMRLEPNKQAQMFRLTVRASKETVTREICDLLTDQF.

2 positions are modified to phosphoserine: serine 632 and serine 634. The span at 651 to 662 shows a compositional bias: polar residues; the sequence is SHSKLNNSNANT. A disordered region spans residues 651-679; sequence SHSKLNNSNANTDLLGLSTPPSNNIGSGS. A compositionally biased stretch (low complexity) spans 668 to 679; the sequence is STPPSNNIGSGS.

It belongs to the adaptor complexes large subunit family. Adaptor protein complex 2 (AP-2) is a heterotetramer composed of two large adaptins (alpha-type and beta-type subunits), a medium adaptin (mu-type subunit AP50) and a small adaptin (sigma-type subunit AP17). As to expression, expressed in the Garland cells, imaginal disks, adult midgut precursors, the antenno-maxillary complex, the endoderm, the fat bodies, and the visceral mesoderm and cells of the CNS and PNS including neuroblasts, the presumptive stomatogastric nervous system, and the lateral chordotonal sense organs.

It is found in the cell membrane. The protein localises to the membrane. The protein resides in the coated pit. In terms of biological role, adaptins are components of the adapter complexes which link clathrin to receptors in coated vesicles. Clathrin-associated protein complexes are believed to interact with the cytoplasmic tails of membrane proteins, leading to their selection and concentration. AP-2alpha is a subunit of the plasma membrane adapter. The polypeptide is AP-2 complex subunit alpha (AP-2alpha) (Drosophila melanogaster (Fruit fly)).